A 196-amino-acid chain; its full sequence is Carnitine operon protein CaiE (196 aa).

Positions 173-196 (TQPLRQMEENRPRLQGTTDVTPKR) are disordered. Positions 187 to 196 (QGTTDVTPKR) are enriched in polar residues.

The protein belongs to the transferase hexapeptide repeat family.

Its pathway is amine and polyamine metabolism; carnitine metabolism. In terms of biological role, overproduction of CaiE stimulates the activity of CaiB and CaiD. The polypeptide is Carnitine operon protein CaiE (Escherichia coli O157:H7).